The sequence spans 188 residues: Elongation factor P (188 aa).

Belongs to the elongation factor P family.

Its subcellular location is the cytoplasm. It functions in the pathway protein biosynthesis; polypeptide chain elongation. Its function is as follows. Involved in peptide bond synthesis. Stimulates efficient translation and peptide-bond synthesis on native or reconstituted 70S ribosomes in vitro. Probably functions indirectly by altering the affinity of the ribosome for aminoacyl-tRNA, thus increasing their reactivity as acceptors for peptidyl transferase. This chain is Elongation factor P (efp), found in Ureaplasma parvum serovar 3 (strain ATCC 700970).